The sequence spans 303 residues: Geranylgeranyl pyrophosphate synthase (303 aa).

Isopentenyl diphosphate-binding residues include K32, R35, and H64. Mg(2+)-binding residues include D71 and D75. R80 is a binding site for dimethylallyl diphosphate. Position 81 (R81) interacts with isopentenyl diphosphate. Dimethylallyl diphosphate contacts are provided by K158, T159, Q192, K209, and K219.

It belongs to the FPP/GGPP synthase family. As to quaternary structure, homooligomer. It depends on Mg(2+) as a cofactor.

The protein localises to the cytoplasm. The enzyme catalyses isopentenyl diphosphate + dimethylallyl diphosphate = (2E)-geranyl diphosphate + diphosphate. It catalyses the reaction isopentenyl diphosphate + (2E)-geranyl diphosphate = (2E,6E)-farnesyl diphosphate + diphosphate. The catalysed reaction is isopentenyl diphosphate + (2E,6E)-farnesyl diphosphate = (2E,6E,10E)-geranylgeranyl diphosphate + diphosphate. The protein operates within isoprenoid biosynthesis; farnesyl diphosphate biosynthesis; farnesyl diphosphate from geranyl diphosphate and isopentenyl diphosphate: step 1/1. It functions in the pathway isoprenoid biosynthesis; geranyl diphosphate biosynthesis; geranyl diphosphate from dimethylallyl diphosphate and isopentenyl diphosphate: step 1/1. It participates in isoprenoid biosynthesis; geranylgeranyl diphosphate biosynthesis; geranylgeranyl diphosphate from farnesyl diphosphate and isopentenyl diphosphate: step 1/1. In terms of biological role, catalyzes the trans-addition of the three molecules of IPP onto DMAPP to form geranylgeranyl pyrophosphate, an important precursor of carotenoids and geranylated proteins. The chain is Geranylgeranyl pyrophosphate synthase (ggps1) from Dictyostelium discoideum (Social amoeba).